A 231-amino-acid chain; its full sequence is Adenosylcobinamide-GDP ribazoletransferase (231 aa).

A run of 6 helical transmembrane segments spans residues 29–49, 53–73, 101–121, 126–146, 167–187, and 211–231; these read ICAY…SMKL, NFLW…LFHF, IGPF…YAFL, IDLI…LHFG, LISL…IISL, and DVLG…LSLI.

Belongs to the CobS family. The cofactor is Mg(2+).

The protein localises to the cell inner membrane. The catalysed reaction is alpha-ribazole + adenosylcob(III)inamide-GDP = adenosylcob(III)alamin + GMP + H(+). It carries out the reaction alpha-ribazole 5'-phosphate + adenosylcob(III)inamide-GDP = adenosylcob(III)alamin 5'-phosphate + GMP + H(+). It functions in the pathway cofactor biosynthesis; adenosylcobalamin biosynthesis; adenosylcobalamin from cob(II)yrinate a,c-diamide: step 7/7. Its function is as follows. Joins adenosylcobinamide-GDP and alpha-ribazole to generate adenosylcobalamin (Ado-cobalamin). Also synthesizes adenosylcobalamin 5'-phosphate from adenosylcobinamide-GDP and alpha-ribazole 5'-phosphate. The protein is Adenosylcobinamide-GDP ribazoletransferase of Kosmotoga olearia (strain ATCC BAA-1733 / DSM 21960 / TBF 19.5.1).